We begin with the raw amino-acid sequence, 340 residues long: Uroporphyrinogen decarboxylase (340 aa).

Substrate is bound by residues 21-25 (RQAGR), aspartate 71, tyrosine 147, serine 202, and histidine 315.

Belongs to the uroporphyrinogen decarboxylase family. Homodimer.

Its subcellular location is the cytoplasm. It carries out the reaction uroporphyrinogen III + 4 H(+) = coproporphyrinogen III + 4 CO2. The protein operates within porphyrin-containing compound metabolism; protoporphyrin-IX biosynthesis; coproporphyrinogen-III from 5-aminolevulinate: step 4/4. Catalyzes the decarboxylation of four acetate groups of uroporphyrinogen-III to yield coproporphyrinogen-III. The polypeptide is Uroporphyrinogen decarboxylase (Nautilia profundicola (strain ATCC BAA-1463 / DSM 18972 / AmH)).